A 159-amino-acid polypeptide reads, in one-letter code: 2-C-methyl-D-erythritol 2,4-cyclodiphosphate synthase (159 aa).

2 residues coordinate a divalent metal cation: aspartate 10 and histidine 12. Residues 10-12 (DVH) and 36-37 (HS) each bind 4-CDP-2-C-methyl-D-erythritol 2-phosphate. Histidine 44 contacts a divalent metal cation. Residues 58-60 (DIG), 63-67 (FPDTD), 102-108 (AQAPKMA), 134-137 (TTTE), phenylalanine 141, and arginine 144 contribute to the 4-CDP-2-C-methyl-D-erythritol 2-phosphate site.

Belongs to the IspF family. As to quaternary structure, homotrimer. A divalent metal cation serves as cofactor.

It catalyses the reaction 4-CDP-2-C-methyl-D-erythritol 2-phosphate = 2-C-methyl-D-erythritol 2,4-cyclic diphosphate + CMP. Its pathway is isoprenoid biosynthesis; isopentenyl diphosphate biosynthesis via DXP pathway; isopentenyl diphosphate from 1-deoxy-D-xylulose 5-phosphate: step 4/6. In terms of biological role, involved in the biosynthesis of isopentenyl diphosphate (IPP) and dimethylallyl diphosphate (DMAPP), two major building blocks of isoprenoid compounds. Catalyzes the conversion of 4-diphosphocytidyl-2-C-methyl-D-erythritol 2-phosphate (CDP-ME2P) to 2-C-methyl-D-erythritol 2,4-cyclodiphosphate (ME-CPP) with a corresponding release of cytidine 5-monophosphate (CMP). In Shewanella sp. (strain ANA-3), this protein is 2-C-methyl-D-erythritol 2,4-cyclodiphosphate synthase.